A 1042-amino-acid polypeptide reads, in one-letter code: Isoleucine--tRNA ligase (1042 aa).

The 'HIGH' region motif lies at 59 to 69 (PFANGLPHYGH). Positions 619-623 (KMSKS) match the 'KMSKS' region motif. Lysine 622 provides a ligand contact to ATP.

It belongs to the class-I aminoacyl-tRNA synthetase family. IleS type 2 subfamily. Monomer. The cofactor is Zn(2+).

It is found in the cytoplasm. The catalysed reaction is tRNA(Ile) + L-isoleucine + ATP = L-isoleucyl-tRNA(Ile) + AMP + diphosphate. Functionally, catalyzes the attachment of isoleucine to tRNA(Ile). As IleRS can inadvertently accommodate and process structurally similar amino acids such as valine, to avoid such errors it has two additional distinct tRNA(Ile)-dependent editing activities. One activity is designated as 'pretransfer' editing and involves the hydrolysis of activated Val-AMP. The other activity is designated 'posttransfer' editing and involves deacylation of mischarged Val-tRNA(Ile). The protein is Isoleucine--tRNA ligase of Nocardia farcinica (strain IFM 10152).